Here is a 503-residue protein sequence, read N- to C-terminus: TGF-beta receptor type-1 (503 aa).

A signal peptide spans 1-29 (MEAAAAAPRRPQLLIVLVAAATLLPGAKA). Over 30-126 (LQCFCHLCTK…QSAGLGPVEL (97 aa)) the chain is Extracellular. Intrachain disulfides connect C32/C50, C34/C37, C44/C67, C82/C96, and C97/C102. N41 is a glycosylation site (N-linked (GlcNAc...) asparagine). Residues 127–147 (AAVIAGPVCFVCIALMLMVYI) traverse the membrane as a helical segment. The Cytoplasmic portion of the chain corresponds to 148–503 (CHNRTVIHHR…QLSQQEGIKM (356 aa)). Phosphoserine is present on S165. Residues 175–204 (TTLKDLIYDMTTSGSGSGLPLLVQRTIART) form the GS domain. Phosphothreonine; by TGFBR2 is present on residues T185 and T186. S187, S189, and S191 each carry phosphoserine; by TGFBR2. The FKBP1A-binding motif lies at 193–194 (LP). The Protein kinase domain occupies 205–495 (IVLQESIGKG…LRIKKTLSQL (291 aa)). ATP is bound by residues 211–219 (IGKGRFGEV) and K232. Residue K268 forms a Glycyl lysine isopeptide (Lys-Gly) (interchain with G-Cter in ubiquitin) linkage. Catalysis depends on D333, which acts as the Proton acceptor. K391 participates in a covalent cross-link: Glycyl lysine isopeptide (Lys-Gly) (interchain with G-Cter in SUMO).

Belongs to the protein kinase superfamily. TKL Ser/Thr protein kinase family. TGFB receptor subfamily. In terms of assembly, homodimer; in the endoplasmic reticulum but also at the cell membrane. Heterohexamer; TGFB1, TGFB2 and TGFB3 homodimeric ligands assemble a functional receptor composed of two TGFBR1 and TGFBR2 heterodimers to form a ligand-receptor heterohexamer. The respective affinity of TGBRB1 and TGFBR2 for the ligands may modulate the kinetics of assembly of the receptor and may explain the different biological activities of TGFB1, TGFB2 and TGFB3. Component of a complex composed of TSC22D1 (via N-terminus), TGFBR1 and TGFBR2; the interaction between TSC22D1 and TGFBR1 is inhibited by SMAD7 and promoted by TGFB1. Interacts with CD109; inhibits TGF-beta receptor activation in keratinocytes. Interacts with RBPMS. Interacts (unphosphorylated) with FKBP1A; prevents TGFBR1 phosphorylation by TGFBR2 and stabilizes it in the inactive conformation. Interacts with SMAD2, SMAD3 and ZFYVE9; ZFYVE9 recruits SMAD2 and SMAD3 to the TGF-beta receptor. Interacts with TRAF6 and MAP3K7; induces MAP3K7 activation by TRAF6. Interacts with PARD6A; involved in TGF-beta induced epithelial to mesenchymal transition. Interacts with NEDD4L. Interacts with SMAD7, SMURF1 and SMURF2; SMAD7 recruits NEDD4L, SMURF1 and SMURF2 to the TGF-beta receptor. Interacts with USP15 and VPS39. Interacts with SDCBP (via C-terminus). Interacts with CAV1 and this interaction is impaired in the presence of SDCBP. Interacts with APPL1; interaction is TGF beta dependent; mediates trafficking of the TGFBR1 from the endosomes to the nucleus via microtubules in a TRAF6-dependent manner. Interacts with GPR50; this interaction promotes the constitutive activation of SMAD signaling pathway. Requires Mg(2+) as cofactor. Mn(2+) is required as a cofactor. Phosphorylated at basal levels in the absence of ligand. Activated upon phosphorylation by TGFBR2, mainly in the GS domain. Phosphorylation in the GS domain abrogates FKBP1A-binding. Post-translationally, N-Glycosylated. In terms of processing, ubiquitinated; undergoes ubiquitination catalyzed by several E3 ubiquitin ligases including SMURF1, SMURF2 and NEDD4L2. Results in the proteasomal and/or lysosomal degradation of the receptor thereby negatively regulating its activity. Deubiquitinated by USP15, leading to stabilization of the protein and enhanced TGF-beta signal. Its ubiquitination and proteasome-mediated degradation is negatively regulated by SDCBP. Ubiquitinated by BFAR via'Lys-63'-linked ubiquitination at Lys-268, leading to TGF-beta signaling activation.

Its subcellular location is the cell membrane. It localises to the cell junction. It is found in the tight junction. The protein resides in the membrane raft. The protein localises to the cell surface. It catalyses the reaction L-threonyl-[receptor-protein] + ATP = O-phospho-L-threonyl-[receptor-protein] + ADP + H(+). It carries out the reaction L-seryl-[receptor-protein] + ATP = O-phospho-L-seryl-[receptor-protein] + ADP + H(+). Kept in an inactive conformation by FKBP1A preventing receptor activation in absence of ligand. CD109 is another inhibitor of the receptor. In terms of biological role, transmembrane serine/threonine kinase forming with the TGF-beta type II serine/threonine kinase receptor, TGFBR2, the non-promiscuous receptor for the TGF-beta cytokines TGFB1, TGFB2 and TGFB3. Transduces the TGFB1, TGFB2 and TGFB3 signal from the cell surface to the cytoplasm and is thus regulating a plethora of physiological and pathological processes including cell cycle arrest in epithelial and hematopoietic cells, control of mesenchymal cell proliferation and differentiation, wound healing, extracellular matrix production, immunosuppression and carcinogenesis. The formation of the receptor complex composed of 2 TGFBR1 and 2 TGFBR2 molecules symmetrically bound to the cytokine dimer results in the phosphorylation and the activation of TGFBR1 by the constitutively active TGFBR2. Activated TGFBR1 phosphorylates SMAD2 which dissociates from the receptor and interacts with SMAD4. The SMAD2-SMAD4 complex is subsequently translocated to the nucleus where it modulates the transcription of the TGF-beta-regulated genes. This constitutes the canonical SMAD-dependent TGF-beta signaling cascade. Also involved in non-canonical, SMAD-independent TGF-beta signaling pathways. For instance, TGFBR1 induces TRAF6 autoubiquitination which in turn results in MAP3K7 ubiquitination and activation to trigger apoptosis. Also regulates epithelial to mesenchymal transition through a SMAD-independent signaling pathway through PARD6A phosphorylation and activation. The sequence is that of TGF-beta receptor type-1 (Tgfbr1) from Mus musculus (Mouse).